A 457-amino-acid chain; its full sequence is Secreted RxLR effector protein 8 (457 aa).

Positions 1-19 (MRGTLATALLLVISSRVAT) are cleaved as a signal peptide. A RxLR-dEER motif is present at residues 48–69 (RFLRGSRKQRDDLAPTAADENR). N-linked (GlcNAc...) asparagine glycosylation is present at Asn68. Disordered stretches follow at residues 110–188 (RLSL…ALKS) and 398–457 (RQTI…RSSS). Residues 135-152 (SASTSTTSDIATSSSRTS) show a composition bias toward low complexity. Composition is skewed to polar residues over residues 153–163 (NQRTPKTQASL) and 176–187 (SKNQFKKSTALK). A compositionally biased stretch (basic residues) spans 442–457 (IKSKDHARKKRPRSSS).

This sequence belongs to the RxLR effector family.

Its subcellular location is the secreted. The protein resides in the host nucleus. In terms of biological role, secreted effector that completely suppresses the host cell death induced by cell death-inducing proteins. This Plasmopara viticola (Downy mildew of grapevine) protein is Secreted RxLR effector protein 8.